The sequence spans 65 residues: SPbeta prophage-derived uncharacterized protein YorO (65 aa).

The sequence is that of SPbeta prophage-derived uncharacterized protein YorO (yorO) from Bacillus subtilis (strain 168).